Consider the following 133-residue polypeptide: ATP synthase epsilon chain, sodium ion specific (133 aa).

The protein belongs to the ATPase epsilon chain family. F-type ATPases have 2 components, CF(1) - the catalytic core - and CF(0) - the membrane proton channel. CF(1) has five subunits: alpha(3), beta(3), gamma(1), delta(1), epsilon(1). CF(0) has three main subunits: a, b and c.

The protein localises to the cell membrane. Inhibited by nitrate. In terms of biological role, produces ATP from ADP in the presence of a sodium gradient across the membrane. This Acetobacterium woodii (strain ATCC 29683 / DSM 1030 / JCM 2381 / KCTC 1655 / WB1) protein is ATP synthase epsilon chain, sodium ion specific (atpC).